The primary structure comprises 773 residues: DNA gyrase subunit B (773 aa).

The Toprim domain maps to 416–530; it reads SEIFLVEGDS…QGHVFIAQAP (115 aa). Mg(2+)-binding residues include Glu-422, Asp-495, and Asp-497.

Belongs to the type II topoisomerase GyrB family. Heterotetramer, composed of two GyrA and two GyrB chains. In the heterotetramer, GyrA contains the active site tyrosine that forms a transient covalent intermediate with DNA, while GyrB binds cofactors and catalyzes ATP hydrolysis. Requires Mg(2+) as cofactor. The cofactor is Mn(2+). It depends on Ca(2+) as a cofactor.

The protein localises to the cytoplasm. It carries out the reaction ATP-dependent breakage, passage and rejoining of double-stranded DNA.. Functionally, a type II topoisomerase that negatively supercoils closed circular double-stranded (ds) DNA in an ATP-dependent manner to modulate DNA topology and maintain chromosomes in an underwound state. Negative supercoiling favors strand separation, and DNA replication, transcription, recombination and repair, all of which involve strand separation. Also able to catalyze the interconversion of other topological isomers of dsDNA rings, including catenanes and knotted rings. Type II topoisomerases break and join 2 DNA strands simultaneously in an ATP-dependent manner. This chain is DNA gyrase subunit B, found in Helicobacter pylori (strain J99 / ATCC 700824) (Campylobacter pylori J99).